A 119-amino-acid chain; its full sequence is Ribonuclease P protein component (119 aa).

It belongs to the RnpA family. Consists of a catalytic RNA component (M1 or rnpB) and a protein subunit.

It catalyses the reaction Endonucleolytic cleavage of RNA, removing 5'-extranucleotides from tRNA precursor.. Its function is as follows. RNaseP catalyzes the removal of the 5'-leader sequence from pre-tRNA to produce the mature 5'-terminus. It can also cleave other RNA substrates such as 4.5S RNA. The protein component plays an auxiliary but essential role in vivo by binding to the 5'-leader sequence and broadening the substrate specificity of the ribozyme. This is Ribonuclease P protein component from Escherichia coli O157:H7.